Here is an 858-residue protein sequence, read N- to C-terminus: Phosphoenolpyruvate carboxylase (858 aa).

Catalysis depends on residues histidine 145 and lysine 531.

This sequence belongs to the PEPCase type 1 family. It depends on Mg(2+) as a cofactor.

The catalysed reaction is oxaloacetate + phosphate = phosphoenolpyruvate + hydrogencarbonate. In terms of biological role, forms oxaloacetate, a four-carbon dicarboxylic acid source for the tricarboxylic acid cycle. The protein is Phosphoenolpyruvate carboxylase of Thermus thermophilus (strain ATCC BAA-163 / DSM 7039 / HB27).